Reading from the N-terminus, the 417-residue chain is Serine hydroxymethyltransferase (417 aa).

The residue at position 54 (Lys54) is an N6-acetyllysine. (6S)-5,6,7,8-tetrahydrofolate is bound by residues Leu121 and 125–127 (GHL). Residue Lys229 is modified to N6-(pyridoxal phosphate)lysine. N6-acetyllysine is present on residues Lys250, Lys285, and Lys354. 355–357 (SPF) contributes to the (6S)-5,6,7,8-tetrahydrofolate binding site. Lys375 is subject to N6-acetyllysine.

It belongs to the SHMT family. In terms of assembly, homodimer. Requires pyridoxal 5'-phosphate as cofactor.

The protein resides in the cytoplasm. It carries out the reaction (6R)-5,10-methylene-5,6,7,8-tetrahydrofolate + glycine + H2O = (6S)-5,6,7,8-tetrahydrofolate + L-serine. Its pathway is one-carbon metabolism; tetrahydrofolate interconversion. It participates in amino-acid biosynthesis; glycine biosynthesis; glycine from L-serine: step 1/1. Catalyzes the reversible interconversion of serine and glycine with tetrahydrofolate (THF) serving as the one-carbon carrier. This reaction serves as the major source of one-carbon groups required for the biosynthesis of purines, thymidylate, methionine, and other important biomolecules. Also exhibits THF-independent aldolase activity toward beta-hydroxyamino acids, producing glycine and aldehydes, via a retro-aldol mechanism. The sequence is that of Serine hydroxymethyltransferase from Shigella sonnei (strain Ss046).